Reading from the N-terminus, the 427-residue chain is Sperm-associated antigen 1A (427 aa).

The disordered stretch occupies residues 46–113 (QKKGPGYREG…GPGSAGESCN (68 aa)). TPR repeat units lie at residues 125–158 (LARL…CIEA), 167–200 (CVLY…HPFS), 202–234 (KPLL…DISV), 302–335 (FTIL…KPNE), 336–369 (CAIY…EPKN), and 371–403 (KAFY…DPNV).

It is found in the cytoplasm. It localises to the dynein axonemal particle. In terms of biological role, may play a role in the cytoplasmic assembly and/or trafficking of the axonemal dynein arms. This is Sperm-associated antigen 1A (spag1a) from Danio rerio (Zebrafish).